We begin with the raw amino-acid sequence, 28 residues long: Expansin-B1 (28 aa).

The Expansin-like CBD domain maps to 11–28 (MLLSLQGPXSLRMVSESG).

The protein belongs to the expansin family. Expansin B subfamily.

Its subcellular location is the secreted. It is found in the cell wall. The protein resides in the membrane. Its function is as follows. May cause loosening and extension of plant cell walls by disrupting non-covalent bonding between cellulose microfibrils and matrix glucans. The polypeptide is Expansin-B1 (Pseudotsuga menziesii (Douglas-fir)).